The following is a 955-amino-acid chain: Anoctamin-4 (955 aa).

The Cytoplasmic portion of the chain corresponds to 1–352 (MEASSSGITN…FGEKIGLYFA (352 aa)). A disordered region spans residues 73-97 (KDDDSLLHPGNLTSTSEDTSRLEAG). The helical transmembrane segment at 353–373 (WLGWYTGMLFPAAFIGLFVFL) threads the bilayer. The Extracellular portion of the chain corresponds to 374–424 (YGVTTLDHCQVSKEVCQATDIIMCPVCDKYCPFMRLSDSCVYAKVTHLFDN). The chain crosses the membrane as a helical span at residues 425–445 (GATVFFAVFMAVWATVFLEFW). Residues 446 to 505 (KRRRAVIAYDWDLIDWEEEEEEIRPQFEAKYSKKERMNPISGKPEPYQAFTDKCSRLIVS) lie on the Cytoplasmic side of the membrane. A helical membrane pass occupies residues 506 to 526 (ASGIFFMICVVIAAVFGIVIY). The Extracellular portion of the chain corresponds to 527 to 547 (RVVTVSTFAAFKWALIRNNSQ). N-linked (GlcNAc...) asparagine glycosylation occurs at Asn-544. A helical transmembrane segment spans residues 548 to 568 (VATTGTAVCINFCIIMLLNVL). Residues 569–595 (YEKVALLLTNLEQPRTESEWENSFTLK) lie on the Cytoplasmic side of the membrane. The helical transmembrane segment at 596–616 (MFLFQFVNLNSSTFYIAFFLG) threads the bilayer. Over 617–715 (RFTGHPGAYL…AYGLFDEYLE (99 aa)) the chain is Extracellular. The chain crosses the membrane as a helical span at residues 716–736 (MILQFGFTTIFVAAFPLAPLL). Topologically, residues 737 to 768 (ALLNNIIEIRLDAYKFVTQWRRPLASRAKDIG) are cytoplasmic. The chain crosses the membrane as a helical span at residues 769-789 (IWYGILEGIGILSVITNAFVI). The Extracellular segment spans residues 790 to 885 (AITSDFIPRL…QFWHVLAARL (96 aa)). N-linked (GlcNAc...) asparagine glycosylation is found at Asn-824 and Asn-837. Residues 886 to 906 (AFIIVFEHLVFCIKHLISYLI) form a helical membrane-spanning segment. Residues 907–955 (PDLPKDLRDRMRREKYLIQEMMYEAELERLQKERKERKKNGKAHHNEWP) are Cytoplasmic-facing.

Belongs to the anoctamin family. As to expression, predominantly expressed in neuronal tissues. Expressed at low levels in ovary, uterus, heart and brain.

The protein localises to the cell membrane. It catalyses the reaction a 1,2-diacyl-sn-glycero-3-phospho-L-serine(in) = a 1,2-diacyl-sn-glycero-3-phospho-L-serine(out). It carries out the reaction a beta-D-galactosyl-(1&lt;-&gt;1')-N-acylsphing-4-enine(out) = a beta-D-galactosyl-(1&lt;-&gt;1')-N-acylsphing-4-enine(in). The enzyme catalyses a 1,2-diacyl-sn-glycero-3-phosphocholine(in) = a 1,2-diacyl-sn-glycero-3-phosphocholine(out). In terms of biological role, has calcium-dependent phospholipid scramblase activity; scrambles phosphatidylserine, phosphatidylcholine and galactosylceramide. Does not exhibit calcium-activated chloride channel (CaCC) activity. The protein is Anoctamin-4 of Mus musculus (Mouse).